Here is a 483-residue protein sequence, read N- to C-terminus: Proline--tRNA ligase (483 aa).

It belongs to the class-II aminoacyl-tRNA synthetase family. ProS type 3 subfamily. As to quaternary structure, homodimer.

Its subcellular location is the cytoplasm. It carries out the reaction tRNA(Pro) + L-proline + ATP = L-prolyl-tRNA(Pro) + AMP + diphosphate. Functionally, catalyzes the attachment of proline to tRNA(Pro) in a two-step reaction: proline is first activated by ATP to form Pro-AMP and then transferred to the acceptor end of tRNA(Pro). This chain is Proline--tRNA ligase, found in Natranaerobius thermophilus (strain ATCC BAA-1301 / DSM 18059 / JW/NM-WN-LF).